We begin with the raw amino-acid sequence, 264 residues long: Probable DNA polymerase sliding clamp 2 (264 aa).

Residues 75 to 94 mediate DNA binding; it reads SIAQEATVGIKISNFVRILD.

Belongs to the PCNA family.

In terms of biological role, sliding clamp subunit. Responsible for tethering the catalytic subunit of DNA polymerase to DNA during high-speed replication. The sequence is that of Probable DNA polymerase sliding clamp 2 from Paramecium bursaria Chlorella virus 1 (PBCV-1).